Consider the following 82-residue polypeptide: MKHPLETLTTAAGILLMAFLSCLLLPAPALGLALAQKLVTMFHLMDLSQLYTLLFCLWFLVLGAIEYFVLRFIWRRWFSLAD.

The next 2 helical transmembrane spans lie at 8-28 and 50-70; these read LTTAAGILLMAFLSCLLLPAP and LYTLLFCLWFLVLGAIEYFVL.

The protein resides in the cell membrane. This is an uncharacterized protein from Escherichia coli (strain K12).